The primary structure comprises 61 residues: UPF0337 protein LMOf2365_2190 (61 aa).

Residues 1–61 form a disordered region; the sequence is MSEDKGMKDK…TGDAKKKLSE (61 aa).

The protein belongs to the UPF0337 (CsbD) family.

In Listeria monocytogenes serotype 4b (strain F2365), this protein is UPF0337 protein LMOf2365_2190.